Consider the following 1209-residue polypeptide: 3',5'-cyclic-AMP phosphodiesterase, isoform I (1209 aa).

Disordered regions lie at residues 16–35, 59–82, 275–353, 372–403, 442–498, 626–655, and 754–792; these read NVAK…GSGT, GGGS…KRKS, LYSG…PLPP, SATS…SPRI, ETLA…MQAE, VPAS…LSQG, and SAGQ…RLPT. Composition is skewed to gly residues over residues 25-35 and 59-77; these read SSNGTGNGSGT and GGGS…GSGS. Residues 275-290 show a composition bias toward polar residues; that stretch reads LYSGSNPSTNPCQSAV. Low complexity predominate over residues 291-314; sequence QNQGQNSNPNPNQNPNTNPNQNQQ. Polar residues predominate over residues 315 to 324; that stretch reads RCSCQPQTSP. The segment covering 372–383 has biased composition (low complexity); it reads SATSSSAGTVPP. Residues 385–400 show a composition bias toward polar residues; sequence GQQTQEYIAGTSSTPS. 2 stretches are compositionally biased toward low complexity: residues 445-462 and 472-483; these read ASSS…NSSS and TSSSASALATSH. Composition is skewed to polar residues over residues 484-498 and 627-645; these read PSNS…MQAE and PASN…SRSG. The region spanning 795-1124 is the PDEase domain; that stretch reads VETPRENELG…DYYQSMIPPS (330 aa). The Proton donor role is filled by His871. Position 871–875 (871–875) interacts with 3',5'-cyclic AMP; sequence HNSLH. His875, His911, Asp912, and Asp1029 together coordinate a divalent metal cation. Asp912, Asp1029, and Gln1080 together coordinate 3',5'-cyclic AMP. The segment covering 1146–1163 has biased composition (acidic residues); it reads EESDQENLAELEEGDESG. The segment at 1146–1209 is disordered; that stretch reads EESDQENLAE…CQNQPQHGGM (64 aa). Residues 1164–1181 are compositionally biased toward low complexity; the sequence is GESTTTGTTGTTAASALS. Residues 1182 to 1193 show a composition bias toward gly residues; that stretch reads GAGGGGGGGGGM. A compositionally biased stretch (polar residues) spans 1199–1209; that stretch reads GCQNQPQHGGM.

It belongs to the cyclic nucleotide phosphodiesterase family. PDE4 subfamily. As to quaternary structure, monomer. Requires a divalent metal cation as cofactor.

It catalyses the reaction 3',5'-cyclic AMP + H2O = AMP + H(+). The protein operates within purine metabolism; 3',5'-cyclic AMP degradation; AMP from 3',5'-cyclic AMP: step 1/1. Functionally, hydrolyzes the second messenger cAMP, which is a key regulator of many important physiological processes. Vital for female fertility. Required for learning/memory. The polypeptide is 3',5'-cyclic-AMP phosphodiesterase, isoform I (Drosophila melanogaster (Fruit fly)).